The chain runs to 253 residues: Troponin T, fast skeletal muscle isoforms (253 aa).

Residues 1–25 (MSDTEEVEHGEEEYEEEEEVQEEEV) show a composition bias toward acidic residues. Disordered stretches follow at residues 1–58 (MSDT…DIQK) and 97–178 (RAER…VLAE). Serine 2 carries the N-acetylserine modification. Composition is skewed to basic and acidic residues over residues 46-58 (PEGEKVDFDDIQK), 97-139 (RAER…DDLK), and 167-178 (TARETKKKVLAE).

It belongs to the troponin T family.

Troponin T is the tropomyosin-binding subunit of troponin, the thin filament regulatory complex which confers calcium-sensitivity to striated muscle actomyosin ATPase activity. In Coturnix japonica (Japanese quail), this protein is Troponin T, fast skeletal muscle isoforms (TNNT3).